The following is a 202-amino-acid chain: MTLWLGPQPLVLASQSRARQALLTNAGIPFEAIPAKLDERGIARVSGLSAPGDIAALLAQEKAAFVSNHHPGRLVLGADQTLALGAREFNKPADRNEAAKQLRELAGRRHELHSAIAVVRNGITLFAEVVIARMTMRPLSDEEIAVYLDEVGDTATCSVGGYQVEGLGVHLFDGIHGDHSTILGLPLLPLLGFLRSQKLLTL.

Asp-79 serves as the catalytic Proton acceptor.

It belongs to the Maf family. It depends on a divalent metal cation as a cofactor.

It is found in the cytoplasm. It carries out the reaction a ribonucleoside 5'-triphosphate + H2O = a ribonucleoside 5'-phosphate + diphosphate + H(+). The catalysed reaction is a 2'-deoxyribonucleoside 5'-triphosphate + H2O = a 2'-deoxyribonucleoside 5'-phosphate + diphosphate + H(+). Nucleoside triphosphate pyrophosphatase. May have a dual role in cell division arrest and in preventing the incorporation of modified nucleotides into cellular nucleic acids. The protein is Nucleoside triphosphate pyrophosphatase of Rhodopseudomonas palustris (strain BisB5).